Here is a 156-residue protein sequence, read N- to C-terminus: Small ribosomal subunit protein uS7 (156 aa).

The protein belongs to the universal ribosomal protein uS7 family. As to quaternary structure, part of the 30S ribosomal subunit. Contacts proteins S9 and S11.

Its function is as follows. One of the primary rRNA binding proteins, it binds directly to 16S rRNA where it nucleates assembly of the head domain of the 30S subunit. Is located at the subunit interface close to the decoding center, probably blocks exit of the E-site tRNA. The protein is Small ribosomal subunit protein uS7 of Thermoanaerobacter sp. (strain X514).